The primary structure comprises 821 residues: Bifunctional dethiobiotin synthetase/7,8-diamino-pelargonic acid aminotransferase, mitochondrial (821 aa).

The dethiobiotin synthetase stretch occupies residues 28–283; it reads SPAFAVFGAN…VHVLPPIPED (256 aa). 39–44 lines the ATP pocket; that stretch reads GVGKTL. Thr43 is a binding site for Mg(2+). Thr72 contributes to the substrate binding site. Glu194 lines the Mg(2+) pocket. 194 to 197 serves as a coordination point for ATP; the sequence is ETAG. The interval 316–820 is 7,8-diamino-pelargonic acid aminotransferase; the sequence is RLNSMQRKSK…AKVHRRLQKL (505 aa). 374–375 is a (8S)-8-amino-7-oxononanoate binding site; that stretch reads WW. 436–437 contacts pyridoxal 5'-phosphate; sequence GS. Position 482 (Tyr482) interacts with (8S)-8-amino-7-oxononanoate. Residue Asp626 coordinates pyridoxal 5'-phosphate. Lys655 and Gly689 together coordinate (8S)-8-amino-7-oxononanoate. At Lys655 the chain carries N6-(pyridoxal phosphate)lysine. A pyridoxal 5'-phosphate-binding site is contributed by Ser691. Arg787 contacts (8S)-8-amino-7-oxononanoate.

The protein in the N-terminal section; belongs to the dethiobiotin synthetase family. It in the C-terminal section; belongs to the class-III pyridoxal-phosphate-dependent aminotransferase family. BioA subfamily. It depends on Mg(2+) as a cofactor. Pyridoxal 5'-phosphate serves as cofactor.

The protein localises to the mitochondrion. The enzyme catalyses (7R,8S)-7,8-diammoniononanoate + CO2 + ATP = (4R,5S)-dethiobiotin + ADP + phosphate + 3 H(+). It carries out the reaction (8S)-8-amino-7-oxononanoate + S-adenosyl-L-methionine = S-adenosyl-4-methylsulfanyl-2-oxobutanoate + (7R,8S)-7,8-diammoniononanoate. It participates in cofactor biosynthesis; biotin biosynthesis; biotin from 7,8-diaminononanoate: step 1/2. Its pathway is cofactor biosynthesis; biotin biosynthesis; 7,8-diaminononanoate from 8-amino-7-oxononanoate (SAM route): step 1/1. Its function is as follows. Bifunctional enzyme that catalyzes two different reactions involved in the biotin biosynthesis. Catalyzes a mechanistically unusual reaction, the ATP-dependent insertion of CO2 between the N7 and N8 nitrogen atoms of 7,8-diaminopelargonic acid (DAPA) to form an ureido ring. In terms of biological role, catalyzes the transfer of the alpha-amino group from S-adenosyl-L-methionine (SAM) to 7-keto-8-aminopelargonic acid (KAPA) to form 7,8-diaminopelargonic acid (DAPA). It is the only aminotransferase known to utilize SAM as an amino donor. The polypeptide is Bifunctional dethiobiotin synthetase/7,8-diamino-pelargonic acid aminotransferase, mitochondrial (BIO3-BIO1) (Oryza sativa subsp. japonica (Rice)).